A 221-amino-acid polypeptide reads, in one-letter code: Elongation factor Ts (221 aa).

The segment at 82–85 (TDFV) is involved in Mg(2+) ion dislocation from EF-Tu.

This sequence belongs to the EF-Ts family.

It localises to the cytoplasm. In terms of biological role, associates with the EF-Tu.GDP complex and induces the exchange of GDP to GTP. It remains bound to the aminoacyl-tRNA.EF-Tu.GTP complex up to the GTP hydrolysis stage on the ribosome. This is Elongation factor Ts from Synechococcus elongatus (strain ATCC 33912 / PCC 7942 / FACHB-805) (Anacystis nidulans R2).